A 37-amino-acid chain; its full sequence is Large ribosomal subunit protein bL36 (37 aa).

The protein belongs to the bacterial ribosomal protein bL36 family.

In Gloeobacter violaceus (strain ATCC 29082 / PCC 7421), this protein is Large ribosomal subunit protein bL36.